Reading from the N-terminus, the 147-residue chain is Hemoglobin subunit beta (147 aa).

N-acetylvaline is present on Val-2. Residues Asn-3–His-147 enclose the Globin domain. At Ser-45 the chain carries Phosphoserine. Residue Lys-60 is modified to N6-acetyllysine. His-64 contributes to the heme b binding site. Position 83 is an N6-acetyllysine (Lys-83). His-93 contributes to the heme b binding site. The residue at position 94 (Cys-94) is an S-nitrosocysteine. At Lys-145 the chain carries N6-acetyllysine.

Belongs to the globin family. In terms of assembly, heterotetramer of two alpha chains and two beta chains. In terms of tissue distribution, red blood cells.

Functionally, involved in oxygen transport from the lung to the various peripheral tissues. The chain is Hemoglobin subunit beta (HBB) from Dasypus novemcinctus (Nine-banded armadillo).